The primary structure comprises 815 residues: (-)-kolavenyl diphosphate synthase TPS28, chloroplastic (815 aa).

Residues 1 to 51 (MFMSSSSSSHARRPQLSSFSYLHPPLPFPGLSFFNTRDKRVNFDSTRIICI) constitute a chloroplast transit peptide. Residue lysine 247 participates in substrate binding. Mg(2+) is bound by residues aspartate 379 and aspartate 381. Positions 379-382 (DIDD) match the DXDD motif motif. Lysine 465 lines the substrate pocket.

It belongs to the terpene synthase family. Tpsc subfamily. Requires Mg(2+) as cofactor.

Its subcellular location is the plastid. It is found in the chloroplast. It carries out the reaction (2E,6E,10E)-geranylgeranyl diphosphate = (-)-kolavenyl diphosphate. With respect to regulation, inhibited by high concentrations of magnesium. Diterpene synthase that catalyzes the formation of (-)-kolavenyl diphosphate from geranylgeranyl diphosphate (GGPP). In Tripterygium wilfordii (Thunder God vine), this protein is (-)-kolavenyl diphosphate synthase TPS28, chloroplastic.